We begin with the raw amino-acid sequence, 192 residues long: Outer-membrane lipoprotein LolB (192 aa).

The first 17 residues, Met-1–Ala-17, serve as a signal peptide directing secretion. The N-palmitoyl cysteine moiety is linked to residue Cys-18. Cys-18 carries the S-diacylglycerol cysteine lipid modification.

Belongs to the LolB family. In terms of assembly, monomer.

The protein resides in the cell outer membrane. In terms of biological role, plays a critical role in the incorporation of lipoproteins in the outer membrane after they are released by the LolA protein. The chain is Outer-membrane lipoprotein LolB from Marinomonas sp. (strain MWYL1).